We begin with the raw amino-acid sequence, 640 residues long: 1-deoxy-D-xylulose-5-phosphate synthase (640 aa).

Residues His-75 and 117-119 (GHA) contribute to the thiamine diphosphate site. Asp-146 lines the Mg(2+) pocket. Thiamine diphosphate contacts are provided by residues 147–148 (AA), Asn-175, and Glu-370. Asn-175 contributes to the Mg(2+) binding site.

Belongs to the transketolase family. DXPS subfamily. In terms of assembly, homodimer. It depends on Mg(2+) as a cofactor. Thiamine diphosphate is required as a cofactor.

The catalysed reaction is D-glyceraldehyde 3-phosphate + pyruvate + H(+) = 1-deoxy-D-xylulose 5-phosphate + CO2. It functions in the pathway metabolic intermediate biosynthesis; 1-deoxy-D-xylulose 5-phosphate biosynthesis; 1-deoxy-D-xylulose 5-phosphate from D-glyceraldehyde 3-phosphate and pyruvate: step 1/1. In terms of biological role, catalyzes the acyloin condensation reaction between C atoms 2 and 3 of pyruvate and glyceraldehyde 3-phosphate to yield 1-deoxy-D-xylulose-5-phosphate (DXP). In Chlamydia trachomatis serovar A (strain ATCC VR-571B / DSM 19440 / HAR-13), this protein is 1-deoxy-D-xylulose-5-phosphate synthase.